The primary structure comprises 489 residues: Protein MGF 505-2R (489 aa).

Belongs to the asfivirus MGF 505 family.

Its function is as follows. Plays a role in virus cell tropism, and may be required for efficient virus replication in macrophages. The protein is Protein MGF 505-2R of Ornithodoros (relapsing fever ticks).